We begin with the raw amino-acid sequence, 461 residues long: Phosphomethylpyrimidine synthase (461 aa).

Substrate contacts are provided by residues asparagine 81, methionine 110, tyrosine 140, histidine 176, 196 to 198 (SRG), 237 to 240 (DSLR), and glutamate 276. Histidine 280 serves as a coordination point for Zn(2+). Tyrosine 303 serves as a coordination point for substrate. Histidine 344 is a binding site for Zn(2+). Residues cysteine 424, cysteine 427, and cysteine 432 each coordinate [4Fe-4S] cluster.

The protein belongs to the ThiC family. It depends on [4Fe-4S] cluster as a cofactor.

It catalyses the reaction 5-amino-1-(5-phospho-beta-D-ribosyl)imidazole + S-adenosyl-L-methionine = 4-amino-2-methyl-5-(phosphooxymethyl)pyrimidine + CO + 5'-deoxyadenosine + formate + L-methionine + 3 H(+). The protein operates within cofactor biosynthesis; thiamine diphosphate biosynthesis. Catalyzes the synthesis of the hydroxymethylpyrimidine phosphate (HMP-P) moiety of thiamine from aminoimidazole ribotide (AIR) in a radical S-adenosyl-L-methionine (SAM)-dependent reaction. In Thermosynechococcus vestitus (strain NIES-2133 / IAM M-273 / BP-1), this protein is Phosphomethylpyrimidine synthase.